Here is a 388-residue protein sequence, read N- to C-terminus: Queuine tRNA-ribosyltransferase (388 aa).

D91 serves as the catalytic Proton acceptor. Substrate contacts are provided by residues 91 to 95 (DSGGY), D145, Q190, and G217. The tract at residues 248-254 (GVGAPED) is RNA binding. Residue D267 is the Nucleophile of the active site. Residues 272–276 (TRLAR) form an RNA binding; important for wobble base 34 recognition region. C305, C307, C310, and H336 together coordinate Zn(2+).

This sequence belongs to the queuine tRNA-ribosyltransferase family. Homodimer. Within each dimer, one monomer is responsible for RNA recognition and catalysis, while the other monomer binds to the replacement base PreQ1. Zn(2+) serves as cofactor.

It catalyses the reaction 7-aminomethyl-7-carbaguanine + guanosine(34) in tRNA = 7-aminomethyl-7-carbaguanosine(34) in tRNA + guanine. The protein operates within tRNA modification; tRNA-queuosine biosynthesis. Catalyzes the base-exchange of a guanine (G) residue with the queuine precursor 7-aminomethyl-7-deazaguanine (PreQ1) at position 34 (anticodon wobble position) in tRNAs with GU(N) anticodons (tRNA-Asp, -Asn, -His and -Tyr). Catalysis occurs through a double-displacement mechanism. The nucleophile active site attacks the C1' of nucleotide 34 to detach the guanine base from the RNA, forming a covalent enzyme-RNA intermediate. The proton acceptor active site deprotonates the incoming PreQ1, allowing a nucleophilic attack on the C1' of the ribose to form the product. After dissociation, two additional enzymatic reactions on the tRNA convert PreQ1 to queuine (Q), resulting in the hypermodified nucleoside queuosine (7-(((4,5-cis-dihydroxy-2-cyclopenten-1-yl)amino)methyl)-7-deazaguanosine). This chain is Queuine tRNA-ribosyltransferase, found in Dictyoglomus turgidum (strain DSM 6724 / Z-1310).